The following is a 204-amino-acid chain: Large ribosomal subunit protein uL4 (204 aa).

The segment at 49-75 (TKGRSDVSGGGKKPWRQKGRGGARAGS) is disordered.

It belongs to the universal ribosomal protein uL4 family. In terms of assembly, part of the 50S ribosomal subunit.

Functionally, one of the primary rRNA binding proteins, this protein initially binds near the 5'-end of the 23S rRNA. It is important during the early stages of 50S assembly. It makes multiple contacts with different domains of the 23S rRNA in the assembled 50S subunit and ribosome. In terms of biological role, forms part of the polypeptide exit tunnel. In Campylobacter jejuni (strain RM1221), this protein is Large ribosomal subunit protein uL4.